Consider the following 101-residue polypeptide: Urease subunit beta (101 aa).

It belongs to the urease beta subunit family. In terms of assembly, heterotrimer of UreA (gamma), UreB (beta) and UreC (alpha) subunits. Three heterotrimers associate to form the active enzyme.

It localises to the cytoplasm. The enzyme catalyses urea + 2 H2O + H(+) = hydrogencarbonate + 2 NH4(+). Its pathway is nitrogen metabolism; urea degradation; CO(2) and NH(3) from urea (urease route): step 1/1. The polypeptide is Urease subunit beta (Roseobacter denitrificans (strain ATCC 33942 / OCh 114) (Erythrobacter sp. (strain OCh 114))).